Reading from the N-terminus, the 250-residue chain is Histone H1.3 (250 aa).

Disordered regions lie at residues Ala17–Asp53 and Gln104–Lys250. A compositionally biased stretch (low complexity) spans Lys27–Pro42. An H15 domain is found at Ser44–Arg118. Residues Ala120–Lys133 show a composition bias toward basic and acidic residues. Low complexity predominate over residues Val138 to Ala161. Residues Lys174–Lys191 are compositionally biased toward basic and acidic residues. Positions Thr192 to Lys234 are enriched in low complexity. Over residues Thr235 to Lys250 the composition is skewed to basic residues.

It belongs to the histone H1/H5 family.

Its subcellular location is the nucleus. It is found in the chromosome. Functionally, histones H1 are necessary for the condensation of nucleosome chains into higher-order structures. This is Histone H1.3 (His1.3) from Drosophila virilis (Fruit fly).